Consider the following 164-residue polypeptide: uncharacterized protein (164 aa).

This is an uncharacterized protein from Saccharomyces cerevisiae (strain ATCC 204508 / S288c) (Baker's yeast).